We begin with the raw amino-acid sequence, 556 residues long: Oxygen-dependent choline dehydrogenase (556 aa).

4-33 (DYIIIGAGSAGNVLATRLTEDPNTTVLLLE) is a binding site for FAD. The active-site Proton acceptor is H473.

It belongs to the GMC oxidoreductase family. The cofactor is FAD.

The enzyme catalyses choline + A = betaine aldehyde + AH2. The catalysed reaction is betaine aldehyde + NAD(+) + H2O = glycine betaine + NADH + 2 H(+). It participates in amine and polyamine biosynthesis; betaine biosynthesis via choline pathway; betaine aldehyde from choline (cytochrome c reductase route): step 1/1. Functionally, involved in the biosynthesis of the osmoprotectant glycine betaine. Catalyzes the oxidation of choline to betaine aldehyde and betaine aldehyde to glycine betaine at the same rate. This Escherichia coli O17:K52:H18 (strain UMN026 / ExPEC) protein is Oxygen-dependent choline dehydrogenase.